Here is a 320-residue protein sequence, read N- to C-terminus: Methylenetetrahydrofolate dehydrogenase [NAD(+)] (320 aa).

Residue Cys-152 is part of the active site. Residues 187–188 (RS) and 210–211 (DI) each bind NAD(+).

Belongs to the tetrahydrofolate dehydrogenase/cyclohydrolase family. Homodimer.

It is found in the cytoplasm. Its subcellular location is the nucleus. It catalyses the reaction (6R)-5,10-methylene-5,6,7,8-tetrahydrofolate + NAD(+) = (6R)-5,10-methenyltetrahydrofolate + NADH. Its pathway is one-carbon metabolism; tetrahydrofolate interconversion. In terms of biological role, catalyzes oxidation of cytoplasmic one-carbon units for purine biosynthesis. The sequence is that of Methylenetetrahydrofolate dehydrogenase [NAD(+)] (mtd1) from Schizosaccharomyces pombe (strain 972 / ATCC 24843) (Fission yeast).